We begin with the raw amino-acid sequence, 416 residues long: Gamma-glutamyl phosphate reductase (416 aa).

Belongs to the gamma-glutamyl phosphate reductase family.

It is found in the cytoplasm. The enzyme catalyses L-glutamate 5-semialdehyde + phosphate + NADP(+) = L-glutamyl 5-phosphate + NADPH + H(+). Its pathway is amino-acid biosynthesis; L-proline biosynthesis; L-glutamate 5-semialdehyde from L-glutamate: step 2/2. Functionally, catalyzes the NADPH-dependent reduction of L-glutamate 5-phosphate into L-glutamate 5-semialdehyde and phosphate. The product spontaneously undergoes cyclization to form 1-pyrroline-5-carboxylate. In Streptococcus pyogenes serotype M3 (strain ATCC BAA-595 / MGAS315), this protein is Gamma-glutamyl phosphate reductase.